The following is a 299-amino-acid chain: Nucleotide-binding protein DIP1313 (299 aa).

22–29 (GLSGAGLS) is a binding site for ATP. 73–76 (DVRS) contacts GTP.

It belongs to the RapZ-like family.

Functionally, displays ATPase and GTPase activities. This chain is Nucleotide-binding protein DIP1313, found in Corynebacterium diphtheriae (strain ATCC 700971 / NCTC 13129 / Biotype gravis).